The chain runs to 339 residues: MELQGWILHCRAGYEQTLASEATMAAHERDVHGYCRARAQSAYVVFHAPAGDAPLPPQLVFARAGAGLIGELQGLPEGGRAEAIAAALPPAVGSATPWVEHPDSDAGRPLARFCRRFTGPLRHALTQTGVTSGDPQRRLRLLFPDSRHCFAGIGPREGWPSGIPRLRMPRNAPSRSVLKLEEALHRLVPENERPYPGEHAVDLGAAPGGWTWLLRERGLTVTAIDNGPLAPALADDPGVEHQRTDAFRFRPRTEVDWLVCDVVDRPQGIARLMTQWLREEWARAAIFNLKLPMRRPLETVRQALDAVRTTGARAHAAQLYHDREEITVYARRMASRNRP.

Residues Ser176, 206–209 (APGG), Asp225, Asp245, and Asp261 contribute to the S-adenosyl-L-methionine site. Lys290 (proton acceptor) is an active-site residue.

The protein belongs to the class I-like SAM-binding methyltransferase superfamily. RNA methyltransferase RlmE family. RlmM subfamily. As to quaternary structure, monomer.

The protein resides in the cytoplasm. It catalyses the reaction cytidine(2498) in 23S rRNA + S-adenosyl-L-methionine = 2'-O-methylcytidine(2498) in 23S rRNA + S-adenosyl-L-homocysteine + H(+). Its function is as follows. Catalyzes the 2'-O-methylation at nucleotide C2498 in 23S rRNA. The polypeptide is Ribosomal RNA large subunit methyltransferase M (Halorhodospira halophila (strain DSM 244 / SL1) (Ectothiorhodospira halophila (strain DSM 244 / SL1))).